The primary structure comprises 248 residues: tRNA (guanine-N(1)-)-methyltransferase (248 aa).

S-adenosyl-L-methionine is bound by residues glycine 114 and 134–139 (IGDYVL).

Belongs to the RNA methyltransferase TrmD family. In terms of assembly, homodimer.

Its subcellular location is the cytoplasm. The catalysed reaction is guanosine(37) in tRNA + S-adenosyl-L-methionine = N(1)-methylguanosine(37) in tRNA + S-adenosyl-L-homocysteine + H(+). In terms of biological role, specifically methylates guanosine-37 in various tRNAs. This Blochmanniella floridana protein is tRNA (guanine-N(1)-)-methyltransferase.